Here is a 30-residue protein sequence, read N- to C-terminus: Uperin-6.1 (30 aa).

As to expression, expressed by the skin dorsal glands.

It localises to the secreted. This chain is Uperin-6.1, found in Uperoleia inundata (Floodplain toadlet).